Consider the following 480-residue polypeptide: tRNA-2-methylthio-N(6)-dimethylallyladenosine synthase (480 aa).

Residues 29–145 (GSFWIQTFGC…LEALLTQVDN (117 aa)) enclose the MTTase N-terminal domain. Positions 38, 74, 108, 180, 184, and 187 each coordinate [4Fe-4S] cluster. One can recognise a Radical SAM core domain in the interval 166 to 403 (RDSTICAWVN…NALVERVALQ (238 aa)). The 69-residue stretch at 406 to 474 (SRYSGKVEQV…AFSLSGTPCD (69 aa)) folds into the TRAM domain.

It belongs to the methylthiotransferase family. MiaB subfamily. Monomer. [4Fe-4S] cluster serves as cofactor.

It localises to the cytoplasm. It carries out the reaction N(6)-dimethylallyladenosine(37) in tRNA + (sulfur carrier)-SH + AH2 + 2 S-adenosyl-L-methionine = 2-methylsulfanyl-N(6)-dimethylallyladenosine(37) in tRNA + (sulfur carrier)-H + 5'-deoxyadenosine + L-methionine + A + S-adenosyl-L-homocysteine + 2 H(+). Catalyzes the methylthiolation of N6-(dimethylallyl)adenosine (i(6)A), leading to the formation of 2-methylthio-N6-(dimethylallyl)adenosine (ms(2)i(6)A) at position 37 in tRNAs that read codons beginning with uridine. This chain is tRNA-2-methylthio-N(6)-dimethylallyladenosine synthase, found in Prochlorococcus marinus (strain MIT 9303).